Consider the following 618-residue polypeptide: MKQSKMLIPTLREMPSDAQVISHALMVRAGYVRQVSAGIYAYLPLAHRTIEKFKTIMRQEFDKIGAVEMLAPALLTADLWRESGRYETYGEDLYKLKNRDKSDFILGPTHEETFTTLVRDAVKSYKQLPLNLYQIQSKYRDEKRPRNGLLRTREFIMKDGYSFHQSYDDLDVTYDAYRQAYEAIFTRAGLDFKGIIGDGGAMGGKDSQEFMAITPDRTNLDRWLVLDKSIPSLADIPEEVLEEIKAELASWLVSGEDTIAYSSESSYAANLEMATSEYKPSSKVTALDDLVEIETPNCKTIDEVAAFLDITEHQVIKTLLFMADHEPVLALLVGNDQINAVKLKNHLGADFLEPASEEEAHTILGAGFGSLGPVHLTDGIRIVADRKIQDLANAVAGANKDGYHLTGVNPNRDFQAEYADIREVKEGETSPDGHGVLQFARGIEIGHIFKLGTRYSDSMAANILDENGRAVPIVMGCYGIGVSRILSAVIEQHARLFVSKTPKGDYRYAWGINFPKELAPFDVHLITVNVKDQEAQDLTEKVEASLMAKGYDVLTDDRNERVGSKFSDSDLIGLPIRVTIGKKAAEGIVEIKIKATGDSIEVHADSLIETLDILTKDN.

Belongs to the class-II aminoacyl-tRNA synthetase family. ProS type 1 subfamily. As to quaternary structure, homodimer.

The protein localises to the cytoplasm. It catalyses the reaction tRNA(Pro) + L-proline + ATP = L-prolyl-tRNA(Pro) + AMP + diphosphate. In terms of biological role, catalyzes the attachment of proline to tRNA(Pro) in a two-step reaction: proline is first activated by ATP to form Pro-AMP and then transferred to the acceptor end of tRNA(Pro). As ProRS can inadvertently accommodate and process non-cognate amino acids such as alanine and cysteine, to avoid such errors it has two additional distinct editing activities against alanine. One activity is designated as 'pretransfer' editing and involves the tRNA(Pro)-independent hydrolysis of activated Ala-AMP. The other activity is designated 'posttransfer' editing and involves deacylation of mischarged Ala-tRNA(Pro). The misacylated Cys-tRNA(Pro) is not edited by ProRS. This is Proline--tRNA ligase from Streptococcus equi subsp. zooepidemicus (strain H70).